The chain runs to 139 residues: Transcription antitermination protein NusB (139 aa).

Belongs to the NusB family.

Its function is as follows. Involved in transcription antitermination. Required for transcription of ribosomal RNA (rRNA) genes. Binds specifically to the boxA antiterminator sequence of the ribosomal RNA (rrn) operons. The sequence is that of Transcription antitermination protein NusB from Erwinia tasmaniensis (strain DSM 17950 / CFBP 7177 / CIP 109463 / NCPPB 4357 / Et1/99).